The chain runs to 629 residues: DNA-directed RNA polymerase subunit beta' (629 aa).

Cysteine 70, cysteine 72, cysteine 85, and cysteine 88 together coordinate Zn(2+). Aspartate 472, aspartate 474, and aspartate 476 together coordinate Mg(2+).

Belongs to the RNA polymerase beta' chain family. RpoC1 subfamily. As to quaternary structure, in plastids the minimal PEP RNA polymerase catalytic core is composed of four subunits: alpha, beta, beta', and beta''. When a (nuclear-encoded) sigma factor is associated with the core the holoenzyme is formed, which can initiate transcription. Requires Mg(2+) as cofactor. It depends on Zn(2+) as a cofactor.

The protein localises to the plastid. It localises to the chloroplast. The enzyme catalyses RNA(n) + a ribonucleoside 5'-triphosphate = RNA(n+1) + diphosphate. Functionally, DNA-dependent RNA polymerase catalyzes the transcription of DNA into RNA using the four ribonucleoside triphosphates as substrates. In Porphyra purpurea (Red seaweed), this protein is DNA-directed RNA polymerase subunit beta'.